The following is a 230-amino-acid chain: uncharacterized protein (230 aa).

This is an uncharacterized protein from Dictyostelium discoideum (Social amoeba).